The chain runs to 323 residues: Probable proline iminopeptidase (323 aa).

Residues 37–301 enclose the AB hydrolase-1 domain; the sequence is VVLHGGPGSR…VIVDEAGHDA (265 aa). S114 (nucleophile) is an active-site residue. D271 is an active-site residue. The active-site Proton donor is H299.

The protein belongs to the peptidase S33 family.

Its subcellular location is the cytoplasm. It carries out the reaction Release of N-terminal proline from a peptide.. Its function is as follows. Specifically catalyzes the removal of N-terminal proline residues from peptides. In Streptomyces coelicolor (strain ATCC BAA-471 / A3(2) / M145), this protein is Probable proline iminopeptidase.